Consider the following 273-residue polypeptide: Aspartate/glutamate leucyltransferase (273 aa).

The protein belongs to the R-transferase family. Bpt subfamily.

Its subcellular location is the cytoplasm. It catalyses the reaction N-terminal L-glutamyl-[protein] + L-leucyl-tRNA(Leu) = N-terminal L-leucyl-L-glutamyl-[protein] + tRNA(Leu) + H(+). It carries out the reaction N-terminal L-aspartyl-[protein] + L-leucyl-tRNA(Leu) = N-terminal L-leucyl-L-aspartyl-[protein] + tRNA(Leu) + H(+). Functions in the N-end rule pathway of protein degradation where it conjugates Leu from its aminoacyl-tRNA to the N-termini of proteins containing an N-terminal aspartate or glutamate. This Ruegeria pomeroyi (strain ATCC 700808 / DSM 15171 / DSS-3) (Silicibacter pomeroyi) protein is Aspartate/glutamate leucyltransferase.